A 371-amino-acid polypeptide reads, in one-letter code: Ferrochelatase (371 aa).

Residues H218 and E299 each contribute to the Fe cation site.

It belongs to the ferrochelatase family.

The protein localises to the cytoplasm. The enzyme catalyses heme b + 2 H(+) = protoporphyrin IX + Fe(2+). It participates in porphyrin-containing compound metabolism; protoheme biosynthesis; protoheme from protoporphyrin-IX: step 1/1. Its function is as follows. Catalyzes the ferrous insertion into protoporphyrin IX. The sequence is that of Ferrochelatase from Cupriavidus taiwanensis (strain DSM 17343 / BCRC 17206 / CCUG 44338 / CIP 107171 / LMG 19424 / R1) (Ralstonia taiwanensis (strain LMG 19424)).